The following is a 105-amino-acid chain: UPF0145 protein CCNA_02462 (105 aa).

This sequence belongs to the UPF0145 family.

This Caulobacter vibrioides (strain NA1000 / CB15N) (Caulobacter crescentus) protein is UPF0145 protein CCNA_02462.